Consider the following 258-residue polypeptide: D-beta-hydroxybutyrate dehydrogenase (258 aa).

An NAD(+)-binding site is contributed by 6-30; the sequence is VITGSTSGIGLAIARTLAKAGANIV. Ser140 lines the substrate pocket. The active-site Proton acceptor is the Tyr153.

The protein belongs to the short-chain dehydrogenases/reductases (SDR) family.

It carries out the reaction (R)-3-hydroxybutanoate + NAD(+) = acetoacetate + NADH + H(+). This chain is D-beta-hydroxybutyrate dehydrogenase (bdhA), found in Rhizobium meliloti (strain 1021) (Ensifer meliloti).